A 108-amino-acid chain; its full sequence is Nucleoid-associated protein IL1848 (108 aa).

Disordered stretches follow at residues 1-26 and 88-108; these read MFKG…AQEE and KERM…KMPF. The span at 9–26 shows a compositional bias: low complexity; that stretch reads MMKQAQQMQERMQQAQEE.

The protein belongs to the YbaB/EbfC family. As to quaternary structure, homodimer.

Its subcellular location is the cytoplasm. It is found in the nucleoid. Binds to DNA and alters its conformation. May be involved in regulation of gene expression, nucleoid organization and DNA protection. The polypeptide is Nucleoid-associated protein IL1848 (Idiomarina loihiensis (strain ATCC BAA-735 / DSM 15497 / L2-TR)).